The following is a 254-amino-acid chain: Ankyrin repeat domain-containing protein 7 (254 aa).

ANK repeat units lie at residues 58-87 (KYRT…KINV), 91-120 (ENKS…DPDL), 124-153 (RYNT…DLEA), 157-186 (DGYT…DVNA), and 190-219 (YQRT…ELCY).

As to expression, testis specific.

The sequence is that of Ankyrin repeat domain-containing protein 7 (ANKRD7) from Homo sapiens (Human).